Here is a 555-residue protein sequence, read N- to C-terminus: La-related protein 7 (555 aa).

The 92-residue stretch at 36–127 (RSRVKQLLSD…RRKEPLGETP (92 aa)) folds into the HTH La-type RNA-binding domain. Residues 133 to 211 (RTVYVELLPK…PRKPGIFPKT (79 aa)) enclose the RRM domain. A disordered region spans residues 218–327 (PFDAVTQDND…ENKDEELNSL (110 aa)). Composition is skewed to polar residues over residues 238-251 (KNST…NNMD), 258-274 (STVT…STVS), and 284-293 (SQSFEASSGE). A coiled-coil region spans residues 295-356 (QFEMSSKMRK…ERLKVGEEVI (62 aa)). A compositionally biased stretch (basic and acidic residues) spans 303–327 (RKVEEEKSELKDLSSENKDEELNSL). The xRRM domain maps to 425-538 (EFLSGVIVKI…TEKLISKAEK (114 aa)).

Belongs to the LARP7 family. Core component of the 7SK RNP complex. Associates with box C/D small nucleolar ribonucleoprotein (snoRNP) complexes.

The protein localises to the nucleus. It localises to the nucleoplasm. Its function is as follows. RNA-binding protein that specifically binds distinct small nuclear RNA (snRNAs) and regulates their processing and function. Specifically binds the 7SK snRNA (7SK RNA) and acts as a core component of the 7SK ribonucleoprotein (RNP) complex, thereby acting as a negative regulator of transcription elongation by RNA polymerase II. The 7SK RNP complex sequesters the positive transcription elongation factor b (P-TEFb) in a large inactive 7SK RNP complex preventing RNA polymerase II phosphorylation and subsequent transcriptional elongation. The 7SK RNP complex also promotes snRNA gene transcription by RNA polymerase II via interaction with the little elongation complex (LEC). LARP7 specifically binds to the highly conserved 3'-terminal U-rich stretch of 7SK RNA; on stimulation, remains associated with 7SK RNA, whereas P-TEFb is released from the complex. LARP7 also acts as a regulator of mRNA splicing fidelity by promoting U6 snRNA processing. Specifically binds U6 snRNAs and associates with a subset of box C/D RNP complexes: promotes U6 snRNA 2'-O-methylation by facilitating U6 snRNA loading into box C/D RNP complexes. U6 snRNA 2'-O-methylation is required for mRNA splicing fidelity. The sequence is that of La-related protein 7 from Danio rerio (Zebrafish).